A 435-amino-acid polypeptide reads, in one-letter code: Adenylosuccinate synthetase (435 aa).

GTP is bound by residues 13–19 (GDEGKGK) and 41–43 (GHT). Asp14 (proton acceptor) is an active-site residue. Mg(2+) contacts are provided by Asp14 and Gly41. IMP contacts are provided by residues 14-17 (DEGK), 39-42 (NAGH), Thr130, Arg144, Gln225, Thr240, and Arg304. The active-site Proton donor is His42. A substrate-binding site is contributed by 300-306 (ATTGRPR). GTP contacts are provided by residues Arg306, 332–334 (KLD), and 419–421 (STG).

It belongs to the adenylosuccinate synthetase family. In terms of assembly, homodimer. The cofactor is Mg(2+).

The protein resides in the cytoplasm. It carries out the reaction IMP + L-aspartate + GTP = N(6)-(1,2-dicarboxyethyl)-AMP + GDP + phosphate + 2 H(+). It participates in purine metabolism; AMP biosynthesis via de novo pathway; AMP from IMP: step 1/2. Functionally, plays an important role in the de novo pathway of purine nucleotide biosynthesis. Catalyzes the first committed step in the biosynthesis of AMP from IMP. In Nitrosospira multiformis (strain ATCC 25196 / NCIMB 11849 / C 71), this protein is Adenylosuccinate synthetase.